Reading from the N-terminus, the 227-residue chain is MPAIKDWPEDERPREKLLHRGAEALSDAELLALILRSGDAASGHSALDQGRLLIQQFDTLRQMATATTSELQAIKGIGPAKAAELQAVFELARRFGRNPLRPGDRYTSPQAVFAHFHERLRDHKRERFIALLLDSKNRLLREVGISEGSLTASIVHPRDVFAPVVRESAAAVLFVHNHPSGDPSPSREDLDITQRLREVGELMGVRVLDHIIIGDEGYVSLADRGVL.

In terms of domain architecture, MPN spans arginine 105–leucine 227. 3 residues coordinate Zn(2+): histidine 176, histidine 178, and aspartate 189. The JAMM motif motif lies at histidine 176–aspartate 189.

The protein belongs to the UPF0758 family.

The protein is UPF0758 protein Pcar_0065 of Syntrophotalea carbinolica (strain DSM 2380 / NBRC 103641 / GraBd1) (Pelobacter carbinolicus).